The following is an 873-amino-acid chain: DNA mismatch repair protein MutS (873 aa).

Residue 625–632 participates in ATP binding; it reads GPNMGGKS.

It belongs to the DNA mismatch repair MutS family.

Its function is as follows. This protein is involved in the repair of mismatches in DNA. It is possible that it carries out the mismatch recognition step. This protein has a weak ATPase activity. In Xanthomonas oryzae pv. oryzae (strain KACC10331 / KXO85), this protein is DNA mismatch repair protein MutS.